The following is a 279-amino-acid chain: uncharacterized protein (279 aa).

The tract at residues 136 to 279 is disordered; that stretch reads TSNATEASEK…FTSDSSDEED (144 aa). Low complexity predominate over residues 228-238; that stretch reads NNGNGAVYSDS.

This is an uncharacterized protein from Invertebrate iridescent virus 3 (IIV-3).